Here is a 137-residue protein sequence, read N- to C-terminus: Acidic phospholipase A2 PL-I (137 aa).

Positions 1–17 are cleaved as a signal peptide; the sequence is AVCVSLLGASSIRPLPL. 7 disulfide bridges follow: cysteine 28–cysteine 89, cysteine 44–cysteine 136, cysteine 46–cysteine 62, cysteine 61–cysteine 117, cysteine 68–cysteine 110, cysteine 78–cysteine 103, and cysteine 96–cysteine 108. Ca(2+) is bound by residues tyrosine 45, glycine 47, and glycine 49. The active site involves histidine 65. Aspartate 66 contributes to the Ca(2+) binding site. Residue aspartate 111 is part of the active site.

It depends on Ca(2+) as a cofactor. As to expression, expressed by the venom gland.

It is found in the secreted. It carries out the reaction a 1,2-diacyl-sn-glycero-3-phosphocholine + H2O = a 1-acyl-sn-glycero-3-phosphocholine + a fatty acid + H(+). In terms of biological role, snake venom phospholipase A2 (PLA2) that may act in the hemostasis system of the prey. Exhibits hydrolytic activities, and prefers the anionic micelles (dPPC with deoxycholate) (793 umol/mg/min) to the zwitterionic micelles (dPPC with Triton X-100) (591 umol/mg/min). PLA2 catalyzes the calcium-dependent hydrolysis of the 2-acyl groups in 3-sn-phosphoglycerides. This Walterinnesia aegyptia (Desert black snake) protein is Acidic phospholipase A2 PL-I.